The chain runs to 557 residues: T-complex protein 1 subunit theta-like 2 (557 aa).

Disordered regions lie at residues 1 to 33 and 531 to 557; these read MDSTVPSALELPQRLALNPRESPRSPEEEEPHL and EIWNPDSKKTKKHPPPVETKKILGLNN.

It belongs to the TCP-1 chaperonin family.

The protein resides in the cytoplasm. In terms of biological role, possible molecular chaperone; assists the folding of proteins upon ATP hydrolysis. The polypeptide is T-complex protein 1 subunit theta-like 2 (CCT8L2) (Homo sapiens (Human)).